Here is a 252-residue protein sequence, read N- to C-terminus: Small ribosomal subunit protein uS2A (252 aa).

An N-acetylserine modification is found at Ser2. Residues 209–252 (EVEQQAAEETTSTGADAEESKEEVAEGQNEASEWAEENTEAVSW) form a disordered region. Residues 241–252 (EWAEENTEAVSW) are compositionally biased toward acidic residues.

This sequence belongs to the universal ribosomal protein uS2 family. In terms of assembly, component of the small ribosomal subunit. Mature ribosomes consist of a small (40S) and a large (60S) subunit. The 40S subunit contains about 33 different proteins and 1 molecule of RNA (18S). The 60S subunit contains about 49 different proteins and 3 molecules of RNA (25S, 5.8S and 5S). Interacts with RPS21.

The protein localises to the cytoplasm. Its function is as follows. Required for the assembly and/or stability of the 40S ribosomal subunit. Required for the processing of the 20S rRNA-precursor to mature 18S rRNA in a late step of the maturation of 40S ribosomal subunits. This is Small ribosomal subunit protein uS2A from Vanderwaltozyma polyspora (strain ATCC 22028 / DSM 70294 / BCRC 21397 / CBS 2163 / NBRC 10782 / NRRL Y-8283 / UCD 57-17) (Kluyveromyces polysporus).